Consider the following 313-residue polypeptide: Homoserine O-succinyltransferase (313 aa).

The active-site Acyl-thioester intermediate is C142. Substrate-binding residues include K163 and S192. H235 serves as the catalytic Proton acceptor. E237 is an active-site residue. R249 contacts substrate.

Belongs to the MetA family.

It localises to the cytoplasm. The enzyme catalyses L-homoserine + succinyl-CoA = O-succinyl-L-homoserine + CoA. It functions in the pathway amino-acid biosynthesis; L-methionine biosynthesis via de novo pathway; O-succinyl-L-homoserine from L-homoserine: step 1/1. Its function is as follows. Transfers a succinyl group from succinyl-CoA to L-homoserine, forming succinyl-L-homoserine. The sequence is that of Homoserine O-succinyltransferase from Shewanella oneidensis (strain ATCC 700550 / JCM 31522 / CIP 106686 / LMG 19005 / NCIMB 14063 / MR-1).